The chain runs to 291 residues: Kidney mitochondrial carrier protein 1 (291 aa).

Serine 2 carries the N-acetylserine modification. 3 Solcar repeats span residues 7 to 96 (KPFV…LKRL), 104 to 189 (ETLL…TKKH), and 198 to 289 (DTVA…LKKL). The next 6 membrane-spanning stretches (helical) occupy residues 9 to 26 (FVYG…TFPI), 71 to 89 (GIAP…KIGT), 106 to 124 (LLVN…SAIA), 164 to 183 (GVSL…LPVY), 204 to 224 (FLSS…VDVV), and 264 to 283 (GFWP…FLTY).

Belongs to the mitochondrial carrier (TC 2.A.29) family. In terms of assembly, interacts with VDAC1. In terms of tissue distribution, present in kidney (at protein level). Expressed predominantly within the kidney cortex in the proximal and distal tubules and at lower levels in the testis and white adipose tissue.

The protein resides in the mitochondrion inner membrane. It catalyses the reaction sulfite(in) + sulfate(out) = sulfite(out) + sulfate(in). It carries out the reaction thiosulfate(in) + sulfate(out) = thiosulfate(out) + sulfate(in). The catalysed reaction is sulfate(out) + phosphate(in) = sulfate(in) + phosphate(out). The enzyme catalyses oxalate(in) + sulfate(out) = oxalate(out) + sulfate(in). It catalyses the reaction malonate(in) + sulfate(out) = malonate(out) + sulfate(in). It carries out the reaction maleate(in) + sulfate(out) = maleate(out) + sulfate(in). The catalysed reaction is (S)-malate(in) + sulfate(out) = (S)-malate(out) + sulfate(in). The enzyme catalyses (3S)-citramalate(in) + sulfate(out) = (3S)-citramalate(out) + sulfate(in). It catalyses the reaction (3R)-citramalate(in) + sulfate(out) = (3R)-citramalate(out) + sulfate(in). It carries out the reaction sulfate(out) + succinate(in) = sulfate(in) + succinate(out). The catalysed reaction is (S,S)-tartrate(in) + sulfate(out) = (S,S)-tartrate(out) + sulfate(in). The enzyme catalyses (2R,3R)-tartrate(in) + sulfate(out) = (2R,3R)-tartrate(out) + sulfate(in). It catalyses the reaction D-aspartate(in) + sulfate(out) = D-aspartate(out) + sulfate(in). It carries out the reaction L-aspartate(in) + sulfate(out) = L-aspartate(out) + sulfate(in). The catalysed reaction is sulfate(in) = sulfate(out). The enzyme catalyses phosphate(in) = phosphate(out). It catalyses the reaction (S)-malate(out) = (S)-malate(in). Functionally, antiporter that transports inorganic anions (sulfate, sulfite, thiosulfate and phosphate) and, to a lesser extent, a variety of dicarboxylates (e.g. malonate, malate and citramalate) and, even more so, aspartate. The sulfate/sulfate exchange is much higher than the phosphate/phosphate and malate/malate exchanges. The transport affinities is higher for sulfate and thiosulfate than for any other substrate. May catalyze the export of sulfite and thiosulfate (the hydrogen sulfide degradation products) from the mitochondria, thereby modulating the level of the hydrogen sulfide. Also may mediate a very low unidirectional transport of sulfate, phosphate and (S)-malate. The protein is Kidney mitochondrial carrier protein 1 of Mus musculus (Mouse).